Reading from the N-terminus, the 379-residue chain is UDP-N-acetylglucosamine--N-acetylmuramyl-(pentapeptide) pyrophosphoryl-undecaprenol N-acetylglucosamine transferase (379 aa).

UDP-N-acetyl-alpha-D-glucosamine-binding positions include 17 to 19 (TGG), Asn-128, Arg-169, Ser-197, and Gln-298.

The protein belongs to the glycosyltransferase 28 family. MurG subfamily.

The protein localises to the cell inner membrane. The catalysed reaction is di-trans,octa-cis-undecaprenyl diphospho-N-acetyl-alpha-D-muramoyl-L-alanyl-D-glutamyl-meso-2,6-diaminopimeloyl-D-alanyl-D-alanine + UDP-N-acetyl-alpha-D-glucosamine = di-trans,octa-cis-undecaprenyl diphospho-[N-acetyl-alpha-D-glucosaminyl-(1-&gt;4)]-N-acetyl-alpha-D-muramoyl-L-alanyl-D-glutamyl-meso-2,6-diaminopimeloyl-D-alanyl-D-alanine + UDP + H(+). It functions in the pathway cell wall biogenesis; peptidoglycan biosynthesis. Cell wall formation. Catalyzes the transfer of a GlcNAc subunit on undecaprenyl-pyrophosphoryl-MurNAc-pentapeptide (lipid intermediate I) to form undecaprenyl-pyrophosphoryl-MurNAc-(pentapeptide)GlcNAc (lipid intermediate II). The protein is UDP-N-acetylglucosamine--N-acetylmuramyl-(pentapeptide) pyrophosphoryl-undecaprenol N-acetylglucosamine transferase of Brucella suis (strain ATCC 23445 / NCTC 10510).